Consider the following 472-residue polypeptide: Adenosylhomocysteinase (472 aa).

Substrate is bound by residues Thr-64, Asp-138, and Glu-198. 199–201 is a binding site for NAD(+); that stretch reads TTT. Positions 228 and 232 each coordinate substrate. Residues Asn-233, 262-267, Glu-285, Asn-320, 341-343, and Asn-386 each bind NAD(+); these read GFGDVG and IGH.

Belongs to the adenosylhomocysteinase family. NAD(+) is required as a cofactor.

Its subcellular location is the cytoplasm. It catalyses the reaction S-adenosyl-L-homocysteine + H2O = L-homocysteine + adenosine. Its pathway is amino-acid biosynthesis; L-homocysteine biosynthesis; L-homocysteine from S-adenosyl-L-homocysteine: step 1/1. Functionally, may play a key role in the regulation of the intracellular concentration of adenosylhomocysteine. The protein is Adenosylhomocysteinase of Prochlorococcus marinus (strain MIT 9301).